The sequence spans 518 residues: Endoglucanase 18 (518 aa).

Residues 1–35 (MANCVRCCCWLLVLMLMALAITAAVVFVRYKNGEG) lie on the Cytoplasmic side of the membrane. The chain crosses the membrane as a helical span at residues 36–56 (VFPFPGVPGAVDHKYADALAV). At 57–518 (ALQFFQVQKS…STSSLARSLS (462 aa)) the chain is on the extracellular side. Asn71 is a glycosylation site (N-linked (GlcNAc...) asparagine). The active-site Nucleophile is Asp101. Asn214, Asn251, and Asn272 each carry an N-linked (GlcNAc...) asparagine glycan. His436 is an active-site residue. A glycan (N-linked (GlcNAc...) asparagine) is linked at Asn477. Residues Asp482 and Glu491 contribute to the active site.

The protein belongs to the glycosyl hydrolase 9 (cellulase E) family.

The protein localises to the membrane. The enzyme catalyses Endohydrolysis of (1-&gt;4)-beta-D-glucosidic linkages in cellulose, lichenin and cereal beta-D-glucans.. The polypeptide is Endoglucanase 18 (Oryza sativa subsp. japonica (Rice)).